We begin with the raw amino-acid sequence, 303 residues long: Glycine--tRNA ligase alpha subunit (303 aa).

The protein belongs to the class-II aminoacyl-tRNA synthetase family. In terms of assembly, tetramer of two alpha and two beta subunits.

The protein localises to the cytoplasm. The catalysed reaction is tRNA(Gly) + glycine + ATP = glycyl-tRNA(Gly) + AMP + diphosphate. The polypeptide is Glycine--tRNA ligase alpha subunit (Streptococcus equi subsp. zooepidemicus (strain H70)).